A 1018-amino-acid polypeptide reads, in one-letter code: Contactin-1 (1018 aa).

An N-terminal signal peptide occupies residues 1–20; sequence MKMWLLVSHLVIISITTCLA. Ig-like C2-type domains are found at residues 41–131, 137–223, 241–326, 331–407, 413–500, and 504–601; these read PIFE…ATLS, PFPP…KSVF, PADI…ARIY, PEWV…AELK, PTFE…GTLV, and PTRI…LVVR. Intrachain disulfides connect C65-C114 and C158-C211. N-linked (GlcNAc...) asparagine glycans are attached at residues N208 and N258. Residues C263 and C310 are joined by a disulfide bond. A glycan (N-linked (GlcNAc...) asparagine) is linked at N338. 2 disulfides stabilise this stretch: C352-C391 and C436-C484. 2 N-linked (GlcNAc...) asparagine glycosylation sites follow: N457 and N473. N494 is a glycosylation site (N-linked (GlcNAc...) (complex) asparagine). The N-linked (GlcNAc...) asparagine glycan is linked to N521. C526 and C583 form a disulfide bridge. N-linked (GlcNAc...) asparagine glycosylation occurs at N591. Fibronectin type-III domains are found at residues 606–704, 709–806, 811–906, and 907–1000; these read PPGG…TDGA, APSD…SAQD, APTE…APPS, and QPPR…TLSP. The interval 693–717 is disordered; sequence SIPSNRIKTDGAAPNVAPSDVGGGG. A glycan (N-linked (GlcNAc...) asparagine) is linked at N933. The GPI-anchor amidated serine moiety is linked to residue S993. Residues 994–1018 constitute a propeptide, removed in mature form; the sequence is GAPTLSPSLLGLLLPAFGILVYLEF.

The protein belongs to the immunoglobulin superfamily. Contactin family. Monomer. Interacts with CNTNAP1 in cis form. Binds to the carbonic-anhydrase like domain of PTPRZ1. Interacts with NOTCH1 and TNR. Detected in a complex with NRCAM and PTPRB. Interacts with TASOR. As to expression, strongly expressed in brain and in neuroblastoma and retinoblastoma cell lines. Lower levels of expression in lung, pancreas, kidney and skeletal muscle.

The protein resides in the cell membrane. Its function is as follows. Contactins mediate cell surface interactions during nervous system development. Involved in the formation of paranodal axo-glial junctions in myelinated peripheral nerves and in the signaling between axons and myelinating glial cells via its association with CNTNAP1. Participates in oligodendrocytes generation by acting as a ligand of NOTCH1. Its association with NOTCH1 promotes NOTCH1 activation through the released notch intracellular domain (NICD) and subsequent translocation to the nucleus. Interaction with TNR induces a repulsion of neurons and an inhibition of neurite outgrowth. The polypeptide is Contactin-1 (CNTN1) (Homo sapiens (Human)).